We begin with the raw amino-acid sequence, 97 residues long: Large ribosomal subunit protein bL27 (97 aa).

Residues 1-12 constitute a propeptide that is removed on maturation; sequence MLKMNLANLQLF. The interval 14–37 is disordered; that stretch reads HKKGGGSTSNGRDSQAKRLGAKAA.

It belongs to the bacterial ribosomal protein bL27 family. Post-translationally, the N-terminus is cleaved by ribosomal processing cysteine protease Prp.

The polypeptide is Large ribosomal subunit protein bL27 (Streptococcus agalactiae serotype III (strain NEM316)).